The primary structure comprises 750 residues: Photosystem I P700 chlorophyll a apoprotein A1 (750 aa).

A run of 8 helical transmembrane segments spans residues 70–93, 156–179, 195–219, 291–309, 346–369, 385–411, 433–455, and 531–549; these read VFSA…FHGA, LYCT…FHYH, LNHH…HVSL, IAHH…GHMY, WHAQ…HHMY, LSLF…IFMV, AIIS…LYIH, and FLVH…LILL. Residues C573 and C582 each coordinate [4Fe-4S] cluster. Helical transmembrane passes span 589–610 and 664–686; these read HVFL…HFSW and LSAY…MFLF. H675 contributes to the chlorophyll a' binding site. Residues M683 and Y691 each contribute to the chlorophyll a site. W692 lines the phylloquinone pocket. Residues 724–744 traverse the membrane as a helical segment; sequence AVGVTHYLLGGIATTWAFFLA.

Belongs to the PsaA/PsaB family. As to quaternary structure, the PsaA/B heterodimer binds the P700 chlorophyll special pair and subsequent electron acceptors. PSI consists of a core antenna complex that captures photons, and an electron transfer chain that converts photonic excitation into a charge separation. The eukaryotic PSI reaction center is composed of at least 11 subunits. Requires P700 is a chlorophyll a/chlorophyll a' dimer, A0 is one or more chlorophyll a, A1 is one or both phylloquinones and FX is a shared 4Fe-4S iron-sulfur center. as cofactor.

It localises to the plastid. The protein resides in the chloroplast thylakoid membrane. It catalyses the reaction reduced [plastocyanin] + hnu + oxidized [2Fe-2S]-[ferredoxin] = oxidized [plastocyanin] + reduced [2Fe-2S]-[ferredoxin]. Its function is as follows. PsaA and PsaB bind P700, the primary electron donor of photosystem I (PSI), as well as the electron acceptors A0, A1 and FX. PSI is a plastocyanin-ferredoxin oxidoreductase, converting photonic excitation into a charge separation, which transfers an electron from the donor P700 chlorophyll pair to the spectroscopically characterized acceptors A0, A1, FX, FA and FB in turn. Oxidized P700 is reduced on the lumenal side of the thylakoid membrane by plastocyanin. This is Photosystem I P700 chlorophyll a apoprotein A1 from Nicotiana sylvestris (Wood tobacco).